A 502-amino-acid chain; its full sequence is MSVDATLSFEEAMEKYDPVLGFEVHVELNTKTKMFSSAPNVFGDEPNTNVNEVDLGMPGVLPVVNKTAVESSIKIGLALNCKIAEYCRFARKNYFYPDTPKNFQTSQYDEPIAYDGYLDIELEDGTVFRVEIERAHMEEDAGKLTHMGGAAGRIQGADYSLVDYNRSGVPLVEIVTKPIEGAGSRAPELAKAYVAAIREIVKNLGVSDAKMERGNVRCDANVSLRPHGRERFGIRSETKNVNSLRAVEHAVRYEIQRHAAVLDSGEPVIQETRHWHEDTRSTTSGRPKSDADDYRYFPEPDLVPVVASREWVEELRATLPEPPAERRKRLKEAWGYSDLEFRDVVNAGVMDSIEETIAAGASADVARKWWMGEIVGRAKVADVDPSELGVTPQVIVELNKLVEDGKINNKMATQVLDGVLAGEGTPAEIVEKRGLAVVSDDGPLLEAIDAALAAQPDVAEKIRGGKVQAIGAIVGGVMKATRGQADAGRVRELILEKLGVEG.

A disordered region spans residues 272–293 (TRHWHEDTRSTTSGRPKSDADD).

This sequence belongs to the GatB/GatE family. GatB subfamily. Heterotrimer of A, B and C subunits.

It carries out the reaction L-glutamyl-tRNA(Gln) + L-glutamine + ATP + H2O = L-glutaminyl-tRNA(Gln) + L-glutamate + ADP + phosphate + H(+). The catalysed reaction is L-aspartyl-tRNA(Asn) + L-glutamine + ATP + H2O = L-asparaginyl-tRNA(Asn) + L-glutamate + ADP + phosphate + 2 H(+). In terms of biological role, allows the formation of correctly charged Asn-tRNA(Asn) or Gln-tRNA(Gln) through the transamidation of misacylated Asp-tRNA(Asn) or Glu-tRNA(Gln) in organisms which lack either or both of asparaginyl-tRNA or glutaminyl-tRNA synthetases. The reaction takes place in the presence of glutamine and ATP through an activated phospho-Asp-tRNA(Asn) or phospho-Glu-tRNA(Gln). This is Aspartyl/glutamyl-tRNA(Asn/Gln) amidotransferase subunit B from Paenarthrobacter aurescens (strain TC1).